The primary structure comprises 307 residues: Ribonuclease Z (307 aa).

Positions 63, 65, 67, 68, 140, 211, and 269 each coordinate Zn(2+). Residue Asp-67 is the Proton acceptor of the active site.

This sequence belongs to the RNase Z family. In terms of assembly, homodimer. The cofactor is Zn(2+).

The catalysed reaction is Endonucleolytic cleavage of RNA, removing extra 3' nucleotides from tRNA precursor, generating 3' termini of tRNAs. A 3'-hydroxy group is left at the tRNA terminus and a 5'-phosphoryl group is left at the trailer molecule.. Its function is as follows. Zinc phosphodiesterase, which displays some tRNA 3'-processing endonuclease activity. Probably involved in tRNA maturation, by removing a 3'-trailer from precursor tRNA. The chain is Ribonuclease Z from Geobacillus kaustophilus (strain HTA426).